Reading from the N-terminus, the 116-residue chain is Large ribosomal subunit protein bL19 (116 aa).

It belongs to the bacterial ribosomal protein bL19 family.

In terms of biological role, this protein is located at the 30S-50S ribosomal subunit interface and may play a role in the structure and function of the aminoacyl-tRNA binding site. The polypeptide is Large ribosomal subunit protein bL19 (Mycoplasma mobile (strain ATCC 43663 / 163K / NCTC 11711) (Mesomycoplasma mobile)).